The sequence spans 407 residues: Probable 2,3-bisphosphoglycerate-independent phosphoglycerate mutase (407 aa).

The interval glycine 175–asparagine 200 is disordered.

This sequence belongs to the BPG-independent phosphoglycerate mutase family. A-PGAM subfamily.

It carries out the reaction (2R)-2-phosphoglycerate = (2R)-3-phosphoglycerate. The protein operates within carbohydrate degradation; glycolysis; pyruvate from D-glyceraldehyde 3-phosphate: step 3/5. Functionally, catalyzes the interconversion of 2-phosphoglycerate and 3-phosphoglycerate. The chain is Probable 2,3-bisphosphoglycerate-independent phosphoglycerate mutase from Aquifex aeolicus (strain VF5).